Here is a 701-residue protein sequence, read N- to C-terminus: Elongation factor G (701 aa).

A tr-type G domain is found at 6–285; that stretch reads HKVRNIGIMA…AVVAYLPNPL (280 aa). Residues 15–22, 79–83, and 133–136 contribute to the GTP site; these read AHIDAGKT, DNPGH, and NKMD.

It belongs to the TRAFAC class translation factor GTPase superfamily. Classic translation factor GTPase family. EF-G/EF-2 subfamily.

It localises to the cytoplasm. In terms of biological role, catalyzes the GTP-dependent ribosomal translocation step during translation elongation. During this step, the ribosome changes from the pre-translocational (PRE) to the post-translocational (POST) state as the newly formed A-site-bound peptidyl-tRNA and P-site-bound deacylated tRNA move to the P and E sites, respectively. Catalyzes the coordinated movement of the two tRNA molecules, the mRNA and conformational changes in the ribosome. In Micrococcus luteus (Micrococcus lysodeikticus), this protein is Elongation factor G (fusA).